Reading from the N-terminus, the 255-residue chain is Polycomb group RING finger protein 5 (255 aa).

Residues 18-57 form an RING-type zinc finger; the sequence is CYICKGYLIKPTTVTECLHTFCKTCIVQHFEDSNDCPRCG. A disordered region spans residues 97–132; the sequence is WKKNKPQENGQDDMSKVDKPKVDEEGDENQDDKDYH. A compositionally biased stretch (basic and acidic residues) spans 109-119; the sequence is DMSKVDKPKVD.

Component of a PRC1-like complex that contains PCGF5, RNF2 and UBE2D3. Interacts with RNF2; the interaction is direct. Interacts with CBX6, CBX7 and CBX8. Interacts with AUTS2; the interaction is direct. Identified in a complex that contains AUTS2, PCGF5, CSNK2B and RNF2.

It is found in the nucleus. The protein resides in the nucleoplasm. Component of a Polycomb group (PcG) multiprotein PRC1-like complex, a complex class required to maintain the transcriptionally repressive state of many genes, including Hox genes, throughout development. PcG PRC1 complex acts via chromatin remodeling and modification of histones; it mediates monoubiquitination of histone H2A 'Lys-119', rendering chromatin heritably changed in its expressibility. Within the PRC1-like complex, regulates RNF2 ubiquitin ligase activity. Plays a redundant role with PCGF3 as part of a PRC1-like complex that mediates monoubiquitination of histone H2A 'Lys-119' on the X chromosome and is required for normal silencing of one copy of the X chromosome in XX females. The sequence is that of Polycomb group RING finger protein 5 (PCGF5) from Bos taurus (Bovine).